The following is a 322-amino-acid chain: Ferredoxin--NADP reductase (322 aa).

FAD is bound by residues Ser-14, Asp-33, Gln-41, Tyr-46, Ala-86, Phe-120, Asp-278, and Ser-319.

This sequence belongs to the ferredoxin--NADP reductase type 2 family. In terms of assembly, homodimer. Requires FAD as cofactor.

It carries out the reaction 2 reduced [2Fe-2S]-[ferredoxin] + NADP(+) + H(+) = 2 oxidized [2Fe-2S]-[ferredoxin] + NADPH. The polypeptide is Ferredoxin--NADP reductase (Salinispora arenicola (strain CNS-205)).